We begin with the raw amino-acid sequence, 339 residues long: MVLQKNWQSLIKPEKLEVEPGPVASRIATVVAEPLERGFGMTLGNALRRILLSSLQGAAVTAIQIDGVLHEFSAVPGVREDVTDIVLNVKQLALRMHGEGPKRMILTATGPGEVTAGQIQAGHDIEIMNPDLVICTLDDGVKLGMEFTVNMGKGYVAAAANRPEDAPIGLIPIDAIYSPVRRVSYKIEQTRVGQVTDYDKLLLTVETNGAVTPEDSLALAARILQDQLQLFINFDEPRPVQHEEPQDDLPFNRNLLRKVDELELSVRSANCLKNDNIVYIGDLVQKSEQEMLRTPNFGRKSLNEIKEVLTGMGLSLGMSVPAWPPENIEDLAKRLDETF.

An alpha N-terminal domain (alpha-NTD) region spans residues 1 to 235 (MVLQKNWQSL…DQLQLFINFD (235 aa)). Residues 251–339 (FNRNLLRKVD…DLAKRLDETF (89 aa)) form an alpha C-terminal domain (alpha-CTD) region.

The protein belongs to the RNA polymerase alpha chain family. As to quaternary structure, homodimer. The RNAP catalytic core consists of 2 alpha, 1 beta, 1 beta' and 1 omega subunit. When a sigma factor is associated with the core the holoenzyme is formed, which can initiate transcription.

The enzyme catalyses RNA(n) + a ribonucleoside 5'-triphosphate = RNA(n+1) + diphosphate. Functionally, DNA-dependent RNA polymerase catalyzes the transcription of DNA into RNA using the four ribonucleoside triphosphates as substrates. This Gluconobacter oxydans (strain 621H) (Gluconobacter suboxydans) protein is DNA-directed RNA polymerase subunit alpha.